A 205-amino-acid chain; its full sequence is Spermatogenesis-associated protein 24 (205 aa).

Residues 17-166 are a coiled coil; that stretch reads LALDQLRDVI…QQKQIFRNHM (150 aa). Positions 138–185 are required for interaction with CBX5 and TBPL1; the sequence is EDILNGKENEIKELQQVISQQKQIFRNHMSDFRIQKQQESYMAQVLDQ. The tract at residues 180–205 is disordered; sequence AQVLDQKHKKASGTRQARSHQHPREK. Positions 186–205 are enriched in basic residues; that stretch reads KHKKASGTRQARSHQHPREK.

Belongs to the SPATA24 family. In terms of assembly, homodimer. Interacts with CBX3, CBX5, GMNN, GTF2B, TBPL1 and the polycomb proteins PHCF2, RNF2 and SCMH1 but not with CBX1 or PCGF2.

Its subcellular location is the cytoplasm. The protein localises to the nucleus. It localises to the nucleolus. The protein resides in the nucleoplasm. Functionally, binds DNA with high affinity but does not bind to TATA boxes. Synergises with GMNN and TBP in activation of TATA box-containing promoters and with GMNN and TBPL1 in activation of the NF1 TATA-less promoter. May play a role in cytoplasm movement and removal during spermiogenesis. The sequence is that of Spermatogenesis-associated protein 24 (SPATA24) from Homo sapiens (Human).